Here is a 104-residue protein sequence, read N- to C-terminus: Pyrimidine/purine nucleoside phosphorylase (104 aa).

The protein belongs to the nucleoside phosphorylase PpnP family.

It catalyses the reaction a purine D-ribonucleoside + phosphate = a purine nucleobase + alpha-D-ribose 1-phosphate. The catalysed reaction is adenosine + phosphate = alpha-D-ribose 1-phosphate + adenine. It carries out the reaction cytidine + phosphate = cytosine + alpha-D-ribose 1-phosphate. The enzyme catalyses guanosine + phosphate = alpha-D-ribose 1-phosphate + guanine. It catalyses the reaction inosine + phosphate = alpha-D-ribose 1-phosphate + hypoxanthine. The catalysed reaction is thymidine + phosphate = 2-deoxy-alpha-D-ribose 1-phosphate + thymine. It carries out the reaction uridine + phosphate = alpha-D-ribose 1-phosphate + uracil. The enzyme catalyses xanthosine + phosphate = alpha-D-ribose 1-phosphate + xanthine. Functionally, catalyzes the phosphorolysis of diverse nucleosides, yielding D-ribose 1-phosphate and the respective free bases. Can use uridine, adenosine, guanosine, cytidine, thymidine, inosine and xanthosine as substrates. Also catalyzes the reverse reactions. In Hydrogenovibrio crunogenus (strain DSM 25203 / XCL-2) (Thiomicrospira crunogena), this protein is Pyrimidine/purine nucleoside phosphorylase.